Consider the following 408-residue polypeptide: Succinylornithine transaminase (408 aa).

K252 carries the N6-(pyridoxal phosphate)lysine modification.

It belongs to the class-III pyridoxal-phosphate-dependent aminotransferase family. AstC subfamily. Requires pyridoxal 5'-phosphate as cofactor.

It carries out the reaction N(2)-succinyl-L-ornithine + 2-oxoglutarate = N-succinyl-L-glutamate 5-semialdehyde + L-glutamate. The protein operates within amino-acid degradation; L-arginine degradation via AST pathway; L-glutamate and succinate from L-arginine: step 3/5. In terms of biological role, catalyzes the transamination of N(2)-succinylornithine and alpha-ketoglutarate into N(2)-succinylglutamate semialdehyde and glutamate. Can also act as an acetylornithine aminotransferase. The polypeptide is Succinylornithine transaminase (Salmonella typhimurium (strain LT2 / SGSC1412 / ATCC 700720)).